The sequence spans 287 residues: Immunoglobulin alpha Fc receptor (287 aa).

An N-terminal signal peptide occupies residues 1–21 (MDPKQTTLLCLVLCLGQRIQA). Topologically, residues 22 to 227 (QEGDFPMPFI…SIHQDYTTQN (206 aa)) are extracellular. Ig-like C2-type domains are found at residues 42–107 (DGSV…IGHY) and 139–200 (GENI…YNRS). Cys49 and Cys100 are joined by a disulfide. Asn65, Asn79, Asn141, Asn177, and Asn186 each carry an N-linked (GlcNAc...) asparagine glycan. Cys146 and Cys193 are oxidised to a cystine. The helical transmembrane segment at 228–246 (LIRMAVAGLVLVALLAILV) threads the bilayer. Topologically, residues 247–287 (ENWHSHTALNKEASADVAEPSWSQQMCQPGLTFARTPSVCK) are cytoplasmic.

Associates with the Fc epsilon RI gamma 2 receptor inducing tyrosine phosphorylation of gamma 2. In terms of assembly, (Microbial infection) Interacts with Staphylococcus aureus protein SSL11. In terms of tissue distribution, isoform A.1, isoform A.2 and isoform A.3 are differentially expressed between blood and mucosal myeloid cells. Isoform A.1, isoform A.2 and isoform A.3 are expressed in monocytes. Isoform A.1 and isoform A.2 are expressed in alveolar macrophages; however only one isoform is expressed at alveolar macrophages surfaces.

It is found in the cell membrane. The protein resides in the secreted. Functionally, binds to the Fc region of immunoglobulins alpha. Mediates several functions including cytokine production. The sequence is that of Immunoglobulin alpha Fc receptor (FCAR) from Homo sapiens (Human).